The following is a 209-amino-acid chain: Uracil phosphoribosyltransferase (209 aa).

5-phospho-alpha-D-ribose 1-diphosphate is bound by residues arginine 79, arginine 104, and 131–139 (DPMLATGNS). Uracil contacts are provided by residues isoleucine 194 and 199–201 (GDA). Aspartate 200 lines the 5-phospho-alpha-D-ribose 1-diphosphate pocket.

Belongs to the UPRTase family. Mg(2+) is required as a cofactor.

It catalyses the reaction UMP + diphosphate = 5-phospho-alpha-D-ribose 1-diphosphate + uracil. Its pathway is pyrimidine metabolism; UMP biosynthesis via salvage pathway; UMP from uracil: step 1/1. Its activity is regulated as follows. Allosterically activated by GTP. Functionally, catalyzes the conversion of uracil and 5-phospho-alpha-D-ribose 1-diphosphate (PRPP) to UMP and diphosphate. This Acidovorax ebreus (strain TPSY) (Diaphorobacter sp. (strain TPSY)) protein is Uracil phosphoribosyltransferase.